A 1600-amino-acid chain; its full sequence is A disintegrin and metalloproteinase with thrombospondin motifs 12 (1600 aa).

Positions Met1–Cys25 are cleaved as a signal peptide. Residues His26 to Arg244 constitute a propeptide that is removed on maturation. N-linked (GlcNAc...) asparagine glycosylation is present at Asn105. The Cysteine switch signature appears at Pro210 to Ser217. A Zn(2+)-binding site is contributed by Cys212. The 211-residue stretch at Arg250–Pro460 folds into the Peptidase M12B domain. Cystine bridges form between Cys326–Cys380, Cys355–Cys362, Cys374–Cys455, Cys413–Cys439, Cys482–Cys505, Cys493–Cys511, Cys500–Cys530, Cys524–Cys535, Cys558–Cys595, Cys562–Cys600, and Cys573–Cys585. Residue His396 coordinates Zn(2+). The active site involves Glu397. Residues His400 and His406 each coordinate Zn(2+). Residues Val469 to Gly548 enclose the Disintegrin domain. TSP type-1 domains lie at Pro546–Arg601, Lys827–Pro887, Trp891–Leu947, and Cys948–Pro1001. A spacer 1 region spans residues Cys705–Phe831. The segment at Pro1001–Tyr1321 is spacer 2. 2 disordered regions span residues Val1006–Ser1140 and Pro1158–Ser1179. A compositionally biased stretch (low complexity) spans Pro1038 to Pro1047. The span at Glu1048–Ile1107 shows a compositional bias: polar residues. The segment covering Thr1130 to Ser1140 has biased composition (low complexity). TSP type-1 domains lie at Ser1318–Ala1371, Trp1373–Glu1428, Pro1429–Leu1477, and Cys1478–Arg1538. Residues Ala1541 to Pro1581 form the PLAC domain.

As to quaternary structure, interacts with COMP. The cofactor is Zn(2+). In terms of processing, the precursor is cleaved by a furin endopeptidase. Post-translationally, subjected to an intracellular maturation process yielding a 120 kDa N-terminal fragment containing the metalloproteinase, disintegrin, one TSP type-1 and the Cys-rich domains and a 83 kDa C-terminal fragment containing the spacer 2 and four TSP type-1 domains. Glycosylated. Can be O-fucosylated by POFUT2 on a serine or a threonine residue found within the consensus sequence C1-X(2)-(S/T)-C2-G of the TSP type-1 repeat domains where C1 and C2 are the first and second cysteine residue of the repeat, respectively. Fucosylated repeats can then be further glycosylated by the addition of a beta-1,3-glucose residue by the glucosyltransferase, B3GALTL. Fucosylation mediates the efficient secretion of ADAMTS family members. Can also be C-glycosylated with one or two mannose molecules on tryptophan residues within the consensus sequence W-X-X-W of the TPRs, and N-glycosylated. These other glycosylations can also facilitate secretion.

It is found in the secreted. Its subcellular location is the extracellular space. The protein resides in the extracellular matrix. Inhibited by alpha-2 macroglobulin. Its function is as follows. Metalloprotease that plays a role in the degradation of COMP. Also cleaves alpha-2 macroglobulin and aggregan. Has anti-tumorigenic properties. This is A disintegrin and metalloproteinase with thrombospondin motifs 12 (Adamts12) from Mus musculus (Mouse).